The chain runs to 377 residues: NADH dehydrogenase [ubiquinone] 1 alpha subcomplex subunit 9, mitochondrial (377 aa).

The transit peptide at 1-35 directs the protein to the mitochondrion; that stretch reads MAAAAQSRVVRVLSMSRSAITAIATSVCHGPPCRQ. At Lys-175 the chain carries N6-succinyllysine. N6-acetyllysine is present on residues Lys-189 and Lys-370.

Belongs to the complex I NDUFA9 subunit family. Complex I is composed of 45 different subunits. This a component of the hydrophobic protein fraction. Interacts with BLOC1S1. Interacts with SLC2A4. Interacts with CLOCK. Interacts with RAB5IF. It depends on FAD as a cofactor. Post-translationally, acetylated on lysine residues. BLOC1S1 is required for acetylation. Acetylated by CLOCK in a circadian manner.

The protein localises to the mitochondrion matrix. Accessory subunit of the mitochondrial membrane respiratory chain NADH dehydrogenase (Complex I), that is believed not to be involved in catalysis. Complex I functions in the transfer of electrons from NADH to the respiratory chain. The immediate electron acceptor for the enzyme is believed to be ubiquinone. In Pan troglodytes (Chimpanzee), this protein is NADH dehydrogenase [ubiquinone] 1 alpha subcomplex subunit 9, mitochondrial (NDUFA9).